The sequence spans 207 residues: uncharacterized protein (207 aa).

This is an uncharacterized protein from Rhizobium meliloti (Ensifer meliloti).